The following is a 341-amino-acid chain: Alanine racemase (341 aa).

Catalysis depends on lysine 33, which acts as the Proton acceptor; specific for D-alanine. Lysine 33 carries the post-translational modification N6-(pyridoxal phosphate)lysine. Position 126 (arginine 126) interacts with substrate. Tyrosine 236 functions as the Proton acceptor; specific for L-alanine in the catalytic mechanism. Residue methionine 284 coordinates substrate.

This sequence belongs to the alanine racemase family. It depends on pyridoxal 5'-phosphate as a cofactor.

The catalysed reaction is L-alanine = D-alanine. It participates in amino-acid biosynthesis; D-alanine biosynthesis; D-alanine from L-alanine: step 1/1. In terms of biological role, catalyzes the interconversion of L-alanine and D-alanine. This chain is Alanine racemase (alr), found in Aquifex pyrophilus.